The following is a 145-amino-acid chain: Actin-depolymerizing factor 11 (145 aa).

Residues 11-145 (SSGIGVAAEC…DIELLRERAH (135 aa)) enclose the ADF-H domain.

It belongs to the actin-binding proteins ADF family.

In terms of biological role, actin-depolymerizing protein. Severs actin filaments (F-actin) and binds to actin monomers. This chain is Actin-depolymerizing factor 11 (ADF11), found in Oryza sativa subsp. japonica (Rice).